A 601-amino-acid polypeptide reads, in one-letter code: Glutathione-regulated potassium-efflux system protein KefB (601 aa).

13 consecutive transmembrane segments (helical) span residues serine 4–alanine 24, isoleucine 29–phenylalanine 49, glutamate 55–leucine 75, isoleucine 87–methionine 107, alanine 115–methionine 135, valine 152–glycine 172, histidine 177–glycine 197, phenylalanine 207–glycine 227, leucine 230–leucine 250, glycine 268–tyrosine 288, leucine 291–leucine 311, methionine 324–alanine 344, and alanine 356–valine 376. The RCK N-terminal domain occupies lysine 400–threonine 519.

This sequence belongs to the monovalent cation:proton antiporter 2 (CPA2) transporter (TC 2.A.37) family. KefB subfamily. In terms of assembly, interacts with the regulatory subunit KefG.

The protein resides in the cell inner membrane. Functionally, pore-forming subunit of a potassium efflux system that confers protection against electrophiles. Catalyzes K(+)/H(+) antiport. This Escherichia coli O81 (strain ED1a) protein is Glutathione-regulated potassium-efflux system protein KefB.